The following is a 488-amino-acid chain: Ribulose bisphosphate carboxylase large chain (488 aa).

Substrate is bound by residues N127 and T177. The active-site Proton acceptor is K179. Position 181 (K181) interacts with substrate. Mg(2+) is bound by residues K205, D207, and E208. At K205 the chain carries N6-carboxylysine. The Proton acceptor role is filled by H297. Positions 298, 330, and 382 each coordinate substrate.

This sequence belongs to the RuBisCO large chain family. Type I subfamily. As to quaternary structure, heterohexadecamer of 8 large chains and 8 small chains. Mg(2+) serves as cofactor.

The protein resides in the plastid. It localises to the chloroplast. It carries out the reaction 2 (2R)-3-phosphoglycerate + 2 H(+) = D-ribulose 1,5-bisphosphate + CO2 + H2O. It catalyses the reaction D-ribulose 1,5-bisphosphate + O2 = 2-phosphoglycolate + (2R)-3-phosphoglycerate + 2 H(+). In terms of biological role, ruBisCO catalyzes two reactions: the carboxylation of D-ribulose 1,5-bisphosphate, the primary event in carbon dioxide fixation, as well as the oxidative fragmentation of the pentose substrate in the photorespiration process. Both reactions occur simultaneously and in competition at the same active site. In Olisthodiscus luteus (Marine phytoflagellate), this protein is Ribulose bisphosphate carboxylase large chain.